We begin with the raw amino-acid sequence, 538 residues long: NADH-quinone oxidoreductase subunit N (538 aa).

The next 14 helical transmembrane spans lie at 28–48 (LAPV…EAFV), 57–77 (QIIV…TTIA), 94–114 (PTLA…VLFA), 147–167 (HTEV…FAAA), 170–190 (LIMM…LCGM), 206–226 (FLLG…LYGC), 249–269 (IVAG…AVPF), 288–308 (MAVA…YVGL), 315–335 (WQIV…IVGL), 343–363 (LLAY…VGAW), 380–400 (VLVY…LILM), 424–444 (IGVL…TAGF), 458–478 (GYAW…AFYL), and 503–523 (IAGW…GVAP).

It belongs to the complex I subunit 2 family. NDH-1 is composed of 14 different subunits. Subunits NuoA, H, J, K, L, M, N constitute the membrane sector of the complex.

It is found in the cell membrane. It catalyses the reaction a quinone + NADH + 5 H(+)(in) = a quinol + NAD(+) + 4 H(+)(out). Functionally, NDH-1 shuttles electrons from NADH, via FMN and iron-sulfur (Fe-S) centers, to quinones in the respiratory chain. The immediate electron acceptor for the enzyme in this species is believed to be a menaquinone. Couples the redox reaction to proton translocation (for every two electrons transferred, four hydrogen ions are translocated across the cytoplasmic membrane), and thus conserves the redox energy in a proton gradient. The chain is NADH-quinone oxidoreductase subunit N from Cutibacterium acnes (strain DSM 16379 / KPA171202) (Propionibacterium acnes).